Reading from the N-terminus, the 354-residue chain is Serine/threonine-protein phosphatase 2A activator 2 (354 aa).

This sequence belongs to the PTPA-type PPIase family.

It is found in the cytoplasm. It catalyses the reaction [protein]-peptidylproline (omega=180) = [protein]-peptidylproline (omega=0). In terms of biological role, PPIases accelerate the folding of proteins. It catalyzes the cis-trans isomerization of proline imidic peptide bonds in oligopeptides. Acts as a regulatory subunit for PP2A-like phosphatases modulating their activity or substrate specificity, probably by inducing a conformational change in the catalytic subunit, a direct target of the PPIase. Can reactivate inactive phosphatase PP2A-phosphatase methylesterase complexes (PP2Ai) in presence of ATP and Mg(2+) by dissociating the inactive form from the complex. This chain is Serine/threonine-protein phosphatase 2A activator 2 (RRD2), found in Yarrowia lipolytica (strain CLIB 122 / E 150) (Yeast).